The sequence spans 133 residues: DNA-binding protein inhibitor ID-2-A (133 aa).

The bHLH domain occupies 23–75 (ARSKTPVDDPMSLLYNMNDCYSKLKELVPSIPQNKKVSKMEILQHVIDYILDL). Positions 106 to 115 (LNTDISILSL) match the Nuclear export signal motif.

In terms of assembly, heterodimer with other HLH proteins. In the embryo, expressed in a range of tissues, with primary expression in the developing pronephros; expressed in the pronephric anlage, and by the swimming tadpole stages expressed robustly in the pronephric tubules and weakly in the pronephric duct. Expressed in the secondary heart field. In the developing nervous system, expressed in the neural crest and in the neural folds during neurula stages, and at stage 20 in the neural tube, ventral mesoderm and mid-hindbrain boundary. By early tailbud stages, expressed in the neural tube, somites and branchial arches. In tadpoles (stage 37/38), expressed in the heart, eye, otic vesicle, somites and branchial arches. Also expressed in migrating muscle cells. Expressed at a low level in limbs, with expression decreasing as limbs develop, but expressed at a high level in blastemas (regenerated limbs), where expression is localized primarily to the blastemal epidermis. Widely expressed in adults with highest expression in the spleen, skin, intestine and brain, and at a much lower level in testis and heart.

The protein resides in the cytoplasm. It is found in the nucleus. In terms of biological role, transcriptional regulator (lacking a basic DNA binding domain) which negatively regulates the basic helix-loop-helix (bHLH) transcription factors by forming heterodimers and inhibiting their DNA binding and transcriptional activity. Inhibits the activity of both neurogenic (neurod1/neuroD) and myogenic (myod1/myoD) bHLH factors. May play a role in the regulation of the circadian clock. The chain is DNA-binding protein inhibitor ID-2-A (id2-a) from Xenopus laevis (African clawed frog).